The sequence spans 338 residues: D-erythrose-4-phosphate dehydrogenase (338 aa).

11–12 (RI) contributes to the NAD(+) binding site. Substrate-binding positions include 153-155 (SCT), arginine 199, 212-213 (TK), and arginine 235. Cysteine 154 (nucleophile) is an active-site residue. Asparagine 317 contacts NAD(+).

Belongs to the glyceraldehyde-3-phosphate dehydrogenase family. Epd subfamily. In terms of assembly, homotetramer.

It is found in the cytoplasm. It carries out the reaction D-erythrose 4-phosphate + NAD(+) + H2O = 4-phospho-D-erythronate + NADH + 2 H(+). It functions in the pathway cofactor biosynthesis; pyridoxine 5'-phosphate biosynthesis; pyridoxine 5'-phosphate from D-erythrose 4-phosphate: step 1/5. Functionally, catalyzes the NAD-dependent conversion of D-erythrose 4-phosphate to 4-phosphoerythronate. In Shewanella sp. (strain MR-4), this protein is D-erythrose-4-phosphate dehydrogenase.